Reading from the N-terminus, the 166-residue chain is MSAIIEAKKQLVDEIAEVLSNSVSTVIVDYRGLTVAEVTDLRSQLREAGVEYKVYKNTMVRRAAEKAGIEGLDEFLTGPTAIATSSEDAVAAAKVISGFAKDHEALEIKSGVMEGNVITAEEVKTVGSLPSHDGLVSMLLSVLQAPVRNFAYAVKAIGEQKEENAE.

The protein belongs to the universal ribosomal protein uL10 family. Part of the ribosomal stalk of the 50S ribosomal subunit. The N-terminus interacts with L11 and the large rRNA to form the base of the stalk. The C-terminus forms an elongated spine to which L12 dimers bind in a sequential fashion forming a multimeric L10(L12)X complex.

In terms of biological role, forms part of the ribosomal stalk, playing a central role in the interaction of the ribosome with GTP-bound translation factors. This Staphylococcus aureus (strain JH1) protein is Large ribosomal subunit protein uL10.